The following is a 108-amino-acid chain: Small proline-rich protein 5 (108 aa).

Positions 1-13 (MSQQKQKQCAPPQ) are enriched in low complexity. Disordered stretches follow at residues 1–24 (MSQQ…QRCP) and 73–108 (PPPQ…SKQK). Pro residues-rich tracts occupy residues 14–24 (QCCPPPQQRCP) and 73–100 (PPPQ…PPPQ).

Positively regulates keratinocyte differentiation by inducing genes associated with epidermal differentiation. In Homo sapiens (Human), this protein is Small proline-rich protein 5.